The chain runs to 727 residues: Glucans biosynthesis glucosyltransferase H (727 aa).

Residues 18–38 (SAMPNERPGAMEPQNLSKMPE) are disordered. Helical transmembrane passes span 58-78 (FLVV…MGAV), 97-117 (VNFC…LILL), 278-298 (LQQF…GWWV), 408-428 (IMAY…LMLA), 460-480 (LFYI…LLLL), 496-516 (IFSV…MMFI), and 572-592 (LLAW…ISAW).

It belongs to the glycosyltransferase 2 family. OpgH subfamily.

The protein resides in the cell inner membrane. It functions in the pathway glycan metabolism; osmoregulated periplasmic glucan (OPG) biosynthesis. Involved in the biosynthesis of osmoregulated periplasmic glucans (OPGs). This is Glucans biosynthesis glucosyltransferase H from Shewanella baltica (strain OS185).